The sequence spans 315 residues: Probable NAD(P)H-dependent D-xylose reductase xyl1 (315 aa).

The active-site Proton donor is the Tyr50. His112 provides a ligand contact to substrate. Residues 166–167 (SN), 215–224 (SSFGPLSFVE), and 271–281 (KSNDPTRLAQN) contribute to the NAD(+) site.

It belongs to the aldo/keto reductase family.

The catalysed reaction is xylitol + NAD(+) = D-xylose + NADH + H(+). The enzyme catalyses xylitol + NADP(+) = D-xylose + NADPH + H(+). Its pathway is carbohydrate metabolism; D-xylose degradation. Catalyzes the initial reaction in the xylose utilization pathway by reducing D-xylose into xylitol. Xylose is a major component of hemicelluloses such as xylan. Most fungi utilize D-xylose via three enzymatic reactions, xylose reductase (XR), xylitol dehydrogenase (XDH), and xylulokinase, to form xylulose 5-phosphate, which enters pentose phosphate pathway. The chain is Probable NAD(P)H-dependent D-xylose reductase xyl1 (xyl1) from Aspergillus fumigatus (strain ATCC MYA-4609 / CBS 101355 / FGSC A1100 / Af293) (Neosartorya fumigata).